Consider the following 213-residue polypeptide: Uracil phosphoribosyltransferase (213 aa).

5-phospho-alpha-D-ribose 1-diphosphate is bound by residues Arg-78, Arg-103, and Asp-131 to Thr-139. Uracil-binding positions include Ile-197 and Gly-202–Ala-204. Asp-203 is a 5-phospho-alpha-D-ribose 1-diphosphate binding site.

It belongs to the UPRTase family. Mg(2+) serves as cofactor.

The enzyme catalyses UMP + diphosphate = 5-phospho-alpha-D-ribose 1-diphosphate + uracil. It participates in pyrimidine metabolism; UMP biosynthesis via salvage pathway; UMP from uracil: step 1/1. Its activity is regulated as follows. Allosterically activated by GTP. Its function is as follows. Catalyzes the conversion of uracil and 5-phospho-alpha-D-ribose 1-diphosphate (PRPP) to UMP and diphosphate. The chain is Uracil phosphoribosyltransferase from Bifidobacterium animalis subsp. lactis (strain AD011).